The primary structure comprises 145 residues: 3-hydroxyacyl-[acyl-carrier-protein] dehydratase FabZ (145 aa).

His-49 is an active-site residue.

Belongs to the thioester dehydratase family. FabZ subfamily.

The protein localises to the cytoplasm. It carries out the reaction a (3R)-hydroxyacyl-[ACP] = a (2E)-enoyl-[ACP] + H2O. In terms of biological role, involved in unsaturated fatty acids biosynthesis. Catalyzes the dehydration of short chain beta-hydroxyacyl-ACPs and long chain saturated and unsaturated beta-hydroxyacyl-ACPs. The sequence is that of 3-hydroxyacyl-[acyl-carrier-protein] dehydratase FabZ from Rickettsia felis (strain ATCC VR-1525 / URRWXCal2) (Rickettsia azadi).